The following is a 115-amino-acid chain: Holo-[acyl-carrier-protein] synthase (115 aa).

Mg(2+)-binding residues include aspartate 6 and glutamate 51.

This sequence belongs to the P-Pant transferase superfamily. AcpS family. Requires Mg(2+) as cofactor.

It localises to the cytoplasm. It catalyses the reaction apo-[ACP] + CoA = holo-[ACP] + adenosine 3',5'-bisphosphate + H(+). Transfers the 4'-phosphopantetheine moiety from coenzyme A to a Ser of acyl-carrier-protein. The sequence is that of Holo-[acyl-carrier-protein] synthase from Campylobacter jejuni subsp. jejuni serotype O:6 (strain 81116 / NCTC 11828).